A 484-amino-acid chain; its full sequence is Keratin, type I cytoskeletal 14 (484 aa).

Positions 1–20 (MATCSRQFTSSSSMKGSCGI) are disordered. The interval 1-120 (MATCSRQFTS…GIGDGLLVGS (120 aa)) is head. The coil 1A stretch occupies residues 121-156 (EKVTMQNLNDRLATYLDKVRALEEANTELEVKIRDW). The 312-residue stretch at 121-432 (EKVTMQNLND…RLLEGEDAHL (312 aa)) folds into the IF rod domain. Residues 157–174 (YQRQRPTEIKDYSPYFKT) are linker 1. Residues 175 to 266 (IEDLKSKILA…KNHEEEMASM (92 aa)) are coil 1B. The tract at residues 267–289 (RGQVGGDVNVEMDAAPGVDLSRI) is linker 12. The tract at residues 290-428 (LNEMRDQYEK…ATYRRLLEGE (139 aa)) is coil 2. Residues 429–484 (DAHLSSSQFSSSSQFSSGSQSSRDVTSTNRQIRTKVMDVHDGKVVSTHEQVLRTKN) form a tail region. Residues 431–484 (HLSSSQFSSSSQFSSGSQSSRDVTSTNRQIRTKVMDVHDGKVVSTHEQVLRTKN) form an interaction with Type I keratins and keratin filaments region. Low complexity predominate over residues 435–450 (SQFSSSSQFSSGSQSS). The tract at residues 435 to 457 (SQFSSSSQFSSGSQSSRDVTSTN) is disordered. Position 447 is a phosphoserine (S447).

It belongs to the intermediate filament family. Heterotetramer of two type I and two type II keratins. Forms a disulfide-linked heterodimer (via 2B domains) with KRT5 (via 2B domains). Forms a heterodimer with KRT1; the interaction is more abundant in the absence of KRT5. Interacts with PLEC isoform 1C, when in a heterodimer with KRT5. Interacts with TRADD and with keratin filaments. Associates with other type I keratins. Interacts with EPPK1. Interacts with KLHL24. Interacts with PKP1 (via N-terminus) and PKP2. Post-translationally, a disulfide bond is formed between rather than within filaments and promotes the formation of a keratin filament cage around the nucleus. Ubiquitinated by the BCR(KLHL24) E3 ubiquitin ligase complex. As to expression, expressed in the corneal epithelium (at protein level). Expressed in the basal layer of the epidermis and the outer root sheath of hair follicles (at protein level). Expressed in the epithelial basal layer in the tail epidermis. Expressed in the parabasal cell row, basal cell layer, and suprabasal epithelial layer of the tongue.

Its subcellular location is the cytoplasm. It is found in the nucleus. In terms of biological role, the nonhelical tail domain is involved in promoting KRT5-KRT14 filaments to self-organize into large bundles and enhances the mechanical properties involved in resilience of keratin intermediate filaments in vitro. This is Keratin, type I cytoskeletal 14 (Krt14) from Mus musculus (Mouse).